Consider the following 143-residue polypeptide: D-aminoacyl-tRNA deacylase (143 aa).

The short motif at 135–136 (GP) is the Gly-cisPro motif, important for rejection of L-amino acids element.

This sequence belongs to the DTD family. Homodimer.

It localises to the cytoplasm. It catalyses the reaction glycyl-tRNA(Ala) + H2O = tRNA(Ala) + glycine + H(+). It carries out the reaction a D-aminoacyl-tRNA + H2O = a tRNA + a D-alpha-amino acid + H(+). In terms of biological role, an aminoacyl-tRNA editing enzyme that deacylates mischarged D-aminoacyl-tRNAs. Also deacylates mischarged glycyl-tRNA(Ala), protecting cells against glycine mischarging by AlaRS. Acts via tRNA-based rather than protein-based catalysis; rejects L-amino acids rather than detecting D-amino acids in the active site. By recycling D-aminoacyl-tRNA to D-amino acids and free tRNA molecules, this enzyme counteracts the toxicity associated with the formation of D-aminoacyl-tRNA entities in vivo and helps enforce protein L-homochirality. This is D-aminoacyl-tRNA deacylase from Mycolicibacterium smegmatis (strain ATCC 700084 / mc(2)155) (Mycobacterium smegmatis).